Reading from the N-terminus, the 182-residue chain is ATP synthase subunit b, chloroplastic (182 aa).

Residues 33 to 55 (VLNIMLLLFGLIYVLKQFLGSLL) traverse the membrane as a helical segment.

The protein belongs to the ATPase B chain family. F-type ATPases have 2 components, F(1) - the catalytic core - and F(0) - the membrane proton channel. F(1) has five subunits: alpha(3), beta(3), gamma(1), delta(1), epsilon(1). F(0) has four main subunits: a(1), b(1), b'(1) and c(10-14). The alpha and beta chains form an alternating ring which encloses part of the gamma chain. F(1) is attached to F(0) by a central stalk formed by the gamma and epsilon chains, while a peripheral stalk is formed by the delta, b and b' chains.

The protein localises to the plastid. Its subcellular location is the chloroplast thylakoid membrane. Its function is as follows. F(1)F(0) ATP synthase produces ATP from ADP in the presence of a proton or sodium gradient. F-type ATPases consist of two structural domains, F(1) containing the extramembraneous catalytic core and F(0) containing the membrane proton channel, linked together by a central stalk and a peripheral stalk. During catalysis, ATP synthesis in the catalytic domain of F(1) is coupled via a rotary mechanism of the central stalk subunits to proton translocation. Component of the F(0) channel, it forms part of the peripheral stalk, linking F(1) to F(0). The polypeptide is ATP synthase subunit b, chloroplastic (Antithamnion sp. (Red alga)).